We begin with the raw amino-acid sequence, 421 residues long: Nuclear speckle RNA-binding protein B (421 aa).

3 disordered regions span residues 1–64 (MDNR…VNIY), 86–114 (TGQT…MVDT), and 197–226 (TDPQ…GIPH). The span at 33–44 (PLAPPHPQPQPP) shows a compositional bias: pro residues. Positions 89–103 (TSTSTTSSSSSSSTS) are enriched in low complexity. The RRM domain occupies 323 to 409 (NTLYVEGLPS…KILRLQFFRN (87 aa)).

Isoform 1: Expressed in root meristems, lateral root primordia, root vascular tissues and cotyledon vascular tissues. Isoform 2: Expressed in root meristems, lateral root primordia and root vascular tissues.

It is found in the nucleus speckle. In terms of biological role, alternative splicing (AS) regulator that binds to specific mRNAs and modulates auxin effects on the transcriptome. Displaced from its targets upon binding to AS competitor long non-coding RNA (ASCO-RNA). This is Nuclear speckle RNA-binding protein B from Arabidopsis thaliana (Mouse-ear cress).